A 477-amino-acid polypeptide reads, in one-letter code: Probable cytosolic Fe-S cluster assembly factor CG17683 (477 aa).

[4Fe-4S] cluster-binding residues include cysteine 23, cysteine 68, cysteine 71, cysteine 74, cysteine 187, cysteine 243, cysteine 395, and cysteine 399.

The protein belongs to the NARF family.

Its function is as follows. Component of the cytosolic iron-sulfur (Fe/S) protein assembly machinery. Required for maturation of extramitochondrial Fe/S proteins. The sequence is that of Probable cytosolic Fe-S cluster assembly factor CG17683 from Drosophila melanogaster (Fruit fly).